The following is a 248-amino-acid chain: Phosphatidylglycerol--prolipoprotein diacylglyceryl transferase (248 aa).

Transmembrane regions (helical) follow at residues 6–26 (FTLFGIDIMWYGILMACGMIL), 47–67 (NIAIIAIPVGLICARIYYVVF), and 84–104 (GGGLAIHGGLIGGILAGYIYT). R130 provides a ligand contact to a 1,2-diacyl-sn-glycero-3-phospho-(1'-sn-glycerol). Transmembrane regions (helical) follow at residues 186-206 (GQVIVTYITLYSIGRFFIEGL) and 218-238 (MAQVISLIGVIGGIIAHVYLS).

This sequence belongs to the Lgt family.

The protein localises to the cell membrane. It catalyses the reaction L-cysteinyl-[prolipoprotein] + a 1,2-diacyl-sn-glycero-3-phospho-(1'-sn-glycerol) = an S-1,2-diacyl-sn-glyceryl-L-cysteinyl-[prolipoprotein] + sn-glycerol 1-phosphate + H(+). It participates in protein modification; lipoprotein biosynthesis (diacylglyceryl transfer). Its function is as follows. Catalyzes the transfer of the diacylglyceryl group from phosphatidylglycerol to the sulfhydryl group of the N-terminal cysteine of a prolipoprotein, the first step in the formation of mature lipoproteins. This chain is Phosphatidylglycerol--prolipoprotein diacylglyceryl transferase, found in Clostridioides difficile (strain 630) (Peptoclostridium difficile).